Consider the following 1179-residue polypeptide: Calcium-activated potassium channel subunit alpha-1 (1179 aa).

Over residues Met-1 to Gly-24 the composition is skewed to gly residues. The tract at residues Met-1–Val-62 is disordered. The Extracellular portion of the chain corresponds to Met-1 to Met-87. Residues Ser-41–Ser-61 show a composition bias toward low complexity. A helical membrane pass occupies residues Trp-88–Leu-108. Residues Trp-109 to Arg-179 lie on the Cytoplasmic side of the membrane. Residues Cys-119, Cys-120, and Cys-122 are each lipidated (S-palmitoyl cysteine). The chain crosses the membrane as a helical span at residues Val-180–Ser-200. Residues Ser-201 to Thr-215 lie on the Extracellular side of the membrane. The helical transmembrane segment at Leu-216–Ala-236 threads the bilayer. The Cytoplasmic portion of the chain corresponds to Ala-237 to Lys-240. The helical transmembrane segment at Leu-241–Val-261 threads the bilayer. Over Ser-262–Leu-265 the chain is Extracellular. Residues Asn-266–Ile-286 form a helical; Voltage-sensor membrane-spanning segment. The Cytoplasmic segment spans residues Leu-287–Leu-301. A helical transmembrane segment spans residues Val-302 to Val-322. Topologically, residues Glu-323 to Gln-336 are extracellular. Positions Ala-337 to Val-359 form an intramembrane region, pore-forming. The Selectivity for potassium motif lies at Thr-353–Tyr-356. The Extracellular segment spans residues Tyr-360–Leu-368. The chain crosses the membrane as a helical span at residues Phe-369–Ile-389. The Cytoplasmic segment spans residues Glu-390–Leu-1179. The region spanning Arg-408–Ile-550 is the RCK N-terminal 1 domain. Glu-440, Gln-463, and Glu-465 together coordinate Mg(2+). The tract at residues Leu-557–Phe-577 is segment S7. The tract at residues Leu-614 to Ile-634 is segment S8. Residues Cys-678 to His-682 are heme-binding motif. The disordered stretch occupies residues Glu-702–Arg-730. A Phosphothreonine modification is found at Thr-706. Residues Ser-708, Ser-721, and Ser-725 each carry the phosphoserine modification. A segment S9 region spans residues Val-780–Leu-800. In terms of domain architecture, RCK N-terminal 2 spans Ser-782–Pro-926. Phosphothreonine is present on Thr-913. Phosphoserine is present on residues Ser-921 and Ser-925. A Calcium bowl motif is present at residues Thr-946–Glu-968. Residues Gln-955, Asp-958, Asp-961, and Asp-963 each coordinate Ca(2+). The interval Phe-975–Phe-995 is segment S10. Residues Arg-1129–Ser-1154 are compositionally biased toward low complexity. A disordered region spans residues Arg-1129 to Leu-1179. The span at Lys-1163–Leu-1179 shows a compositional bias: basic and acidic residues. Phosphoserine is present on residues Ser-1164 and Ser-1167.

Belongs to the potassium channel family. Calcium-activated (TC 1.A.1.3) subfamily. KCa1.1/KCNMA1 sub-subfamily. Homotetramer; which constitutes the calcium-activated potassium channel. Interacts with beta subunits KCNMB1, KCNMB2, KCNMB3 and KCNMB4. Interacts with gamma subunits LRRC26, LRRC38, LRRC52 and LRRC55. Beta and gamma subunits are accessory, and modulate its activity. Interacts with RAB11B. In terms of processing, phosphorylated. Phosphorylation by kinases such as PKA and/or PKG. In smooth muscles, phosphorylation affects its activity. Palmitoylation by ZDHHC22 and ZDHHC23 within the intracellular linker between the S0 and S1 transmembrane domains regulates localization to the plasma membrane. Depalmitoylated by LYPLA1 and LYPLAL1, leading to retard exit from the trans-Golgi network.

The protein localises to the cell membrane. Its subcellular location is the endoplasmic reticulum membrane. It catalyses the reaction K(+)(in) = K(+)(out). Its activity is regulated as follows. Ethanol and carbon monoxide-bound heme increase channel activation. Heme inhibits channel activation. Potassium channel activated by both membrane depolarization or increase in cytosolic Ca(2+) that mediates export of K(+). It is also activated by the concentration of cytosolic Mg(2+). Its activation dampens the excitatory events that elevate the cytosolic Ca(2+) concentration and/or depolarize the cell membrane. It therefore contributes to repolarization of the membrane potential. Plays a key role in controlling excitability in a number of systems, such as regulation of the contraction of smooth muscle, the tuning of hair cells in the cochlea, regulation of transmitter release, and innate immunity. In smooth muscles, its activation by high level of Ca(2+), caused by ryanodine receptors in the sarcoplasmic reticulum, regulates the membrane potential. In cochlea cells, its number and kinetic properties partly determine the characteristic frequency of each hair cell and thereby helps to establish a tonotopic map. Kinetics of KCNMA1 channels are determined by alternative splicing, phosphorylation status and its combination with modulating beta subunits. Highly sensitive to both iberiotoxin (IbTx) and charybdotoxin (CTX). In terms of biological role, potassium channel activated by both membrane depolarization or increase in cytosolic Ca(2+) that mediates export of K(+). The polypeptide is Calcium-activated potassium channel subunit alpha-1 (KCNMA1) (Oryctolagus cuniculus (Rabbit)).